Consider the following 450-residue polypeptide: Ribosomal protein uS12 methylthiotransferase RimO (450 aa).

The MTTase N-terminal domain maps to 9–124 (NRINVVTLGC…LLSALEADYK (116 aa)). The [4Fe-4S] cluster site is built by C18, C53, C87, C148, C152, and C155. The 232-residue stretch at 134-365 (TTPKNYAYLK…EIQSQISWEL (232 aa)) folds into the Radical SAM core domain. The region spanning 367-434 (QQKIGEVFNV…DFDLYGEPLN (68 aa)) is the TRAM domain.

Belongs to the methylthiotransferase family. RimO subfamily. Requires [4Fe-4S] cluster as cofactor.

The protein resides in the cytoplasm. The catalysed reaction is L-aspartate(89)-[ribosomal protein uS12]-hydrogen + (sulfur carrier)-SH + AH2 + 2 S-adenosyl-L-methionine = 3-methylsulfanyl-L-aspartate(89)-[ribosomal protein uS12]-hydrogen + (sulfur carrier)-H + 5'-deoxyadenosine + L-methionine + A + S-adenosyl-L-homocysteine + 2 H(+). Its function is as follows. Catalyzes the methylthiolation of an aspartic acid residue of ribosomal protein uS12. The polypeptide is Ribosomal protein uS12 methylthiotransferase RimO (Christiangramia forsetii (strain DSM 17595 / CGMCC 1.15422 / KT0803) (Gramella forsetii)).